The following is a 435-amino-acid chain: Cytidine monophosphate-N-acetylneuraminic acid hydroxylase (435 aa).

Belongs to the CMP-Neu5Ac hydroxylase family. The cofactor is [2Fe-2S] cluster.

The protein localises to the cytoplasm. It catalyses the reaction CMP-N-acetyl-beta-neuraminate + 2 Fe(II)-[cytochrome b5] + O2 + 2 H(+) = CMP-N-glycoloyl-beta-neuraminate + 2 Fe(III)-[cytochrome b5] + H2O. The protein operates within amino-sugar metabolism; N-acetylneuraminate metabolism. Its function is as follows. Sialic acids are components of carbohydrate chains of glycoconjugates and are involved in cell-cell recognition and cell-pathogen interactions. Catalyzes the conversion of CMP-N-acetylneuraminic acid (CMP-Neu5Ac) into its hydroxylated derivative CMP-N-glycolylneuraminic acid (CMP-Neu5Gc), a sialic acid abundantly expressed at the surface of many cells. The protein is Cytidine monophosphate-N-acetylneuraminic acid hydroxylase of Sus scrofa (Pig).